Reading from the N-terminus, the 303-residue chain is Coenzyme PQQ synthesis protein B (303 aa).

This sequence belongs to the PqqB family.

It participates in cofactor biosynthesis; pyrroloquinoline quinone biosynthesis. Functionally, may be involved in the transport of PQQ or its precursor to the periplasm. This is Coenzyme PQQ synthesis protein B from Rhizobium meliloti (strain 1021) (Ensifer meliloti).